Consider the following 436-residue polypeptide: Serine/threonine-protein kinase 40 (436 aa).

Over residues 1–10 the composition is skewed to basic and acidic residues; that stretch reads MKRRASDRGA. The segment at 1 to 25 is disordered; sequence MKRRASDRGAGETSARAKALGSGIS. The Protein kinase domain occupies 35-332; it reads FILGPRLGNS…DVLEALSSII (298 aa). ATP is bound by residues 41-49 and Lys-66; that span reads LGNSPVPSI. Asp-197 serves as the catalytic Proton acceptor. The segment at 396-417 is disordered; sequence RSWVPKRQSGAGVPPVRRLGHD.

The protein belongs to the protein kinase superfamily. CAMK Ser/Thr protein kinase family.

The protein localises to the nucleus. It localises to the cytoplasm. The catalysed reaction is L-seryl-[protein] + ATP = O-phospho-L-seryl-[protein] + ADP + H(+). It carries out the reaction L-threonyl-[protein] + ATP = O-phospho-L-threonyl-[protein] + ADP + H(+). Functionally, may be a negative regulator of NF-kappa-B and p53-mediated gene transcription. The chain is Serine/threonine-protein kinase 40 (STK40) from Bos taurus (Bovine).